A 462-amino-acid chain; its full sequence is Probable protein phosphatase 2C 1 (462 aa).

Residues 60 to 362 (SSCIFTQQGR…DDCAVVCLFL (303 aa)) enclose the PPM-type phosphatase domain. Mn(2+) is bound by residues D95, G96, D307, and D353. 2 disordered regions span residues 369–394 (ETSD…QGAE) and 421–443 (EADN…LEGV). A compositionally biased stretch (polar residues) spans 376-385 (QCFSSATNAV). The span at 424–434 (NAEKEKTREGE) shows a compositional bias: basic and acidic residues.

This sequence belongs to the PP2C family. Interacts with GCN5. It depends on Mg(2+) as a cofactor. Requires Mn(2+) as cofactor.

The enzyme catalyses O-phospho-L-seryl-[protein] + H2O = L-seryl-[protein] + phosphate. It catalyses the reaction O-phospho-L-threonyl-[protein] + H2O = L-threonyl-[protein] + phosphate. Its function is as follows. May act as negative regulator of GCN5. This Arabidopsis thaliana (Mouse-ear cress) protein is Probable protein phosphatase 2C 1 (PPC6-6).